Here is a 322-residue protein sequence, read N- to C-terminus: Undecaprenyl-phosphate 4-deoxy-4-formamido-L-arabinose transferase (322 aa).

The Cytoplasmic segment spans residues 1-235 (MFEIHPVKKV…TCLTTTPLRM (235 aa)). Residues 236–256 (LSLLGSIIAIGGFSIAVLLVI) traverse the membrane as a helical segment. The Periplasmic portion of the chain corresponds to 257–269 (LRLTFGPQWAAEG). The helical transmembrane segment at 270–290 (VFMLFAVLFTFIGAQFIGMGL) threads the bilayer. The Cytoplasmic segment spans residues 291–322 (LGEYIGRIYTDVRARPRYFVQQVIRPSSKENE).

Belongs to the glycosyltransferase 2 family.

The protein resides in the cell inner membrane. The enzyme catalyses UDP-4-deoxy-4-formamido-beta-L-arabinose + di-trans,octa-cis-undecaprenyl phosphate = 4-deoxy-4-formamido-alpha-L-arabinopyranosyl di-trans,octa-cis-undecaprenyl phosphate + UDP. It functions in the pathway glycolipid biosynthesis; 4-amino-4-deoxy-alpha-L-arabinose undecaprenyl phosphate biosynthesis; 4-amino-4-deoxy-alpha-L-arabinose undecaprenyl phosphate from UDP-4-deoxy-4-formamido-beta-L-arabinose and undecaprenyl phosphate: step 1/2. The protein operates within bacterial outer membrane biogenesis; lipopolysaccharide biosynthesis. Catalyzes the transfer of 4-deoxy-4-formamido-L-arabinose from UDP to undecaprenyl phosphate. The modified arabinose is attached to lipid A and is required for resistance to polymyxin and cationic antimicrobial peptides. The protein is Undecaprenyl-phosphate 4-deoxy-4-formamido-L-arabinose transferase of Escherichia coli O17:K52:H18 (strain UMN026 / ExPEC).